Reading from the N-terminus, the 1116-residue chain is MASSGGGGGGGEEGEGRGATKVNQELWYACAGPLVSLPPQGSLIVYFPQGHSEQVAASMRKDADAQIPSYPNLPSKLICILHSVTMLADPDTDEVYARMTLQPVSNVTQCDKETLLASELALKQTRPQTEFFCKTLTASDTSTHGGFSVPRRAAERIFPRLDFSMQPPAQELQARDLHDNVWTFRHIYRGQPKRHLLTTGWSLFVSGKRLLAGDSVLFIRDAKQQLLLGIRRANRQPTNLSSSVLSSDSMHIGILAAAAHAAANNSQFTIYYNPRASTSEFVIPFAKYQKAVYGNQLSLGMRFRMMFETEESGTRRYMGTITGISDLDPVRWKTSHWRNIQVAWDEAAPTERRTRVSLWEIEPIIAPFFIYPSPLFTAKRPRLPGMTDDETEMDGLLKRAMPWVGEEICKKDLNIQNSVVPGLNLAQWMNMQHSSSLPGTVVQPELLNSLSGKPVQNLAAADLSRQISFHPQFLQQNNIQFNTALVPQQNQQTEQLAKVIPTPNQLGSVIIPQKVVQDCNSEQRQHVVTQPVQGSQPNINIPQPQLVVQAQLQQPQVILQAQLQQPQVVVQAQLQQTQPSVQSHTVLQGGLQQIQLLQQQQPHVQHQQIPQQLHHQQQQTQQLQPVQQVQQSVQEHQQIKIQPVHVSMDASMNTQVADHQMKLQLLKALQPQQPLISEQQKMLLDLQQQVINSQSAPQQCVQVTNQAISLHNSNTIQYPTQQKVQSHQVQDLTGNVIPNSKSDIATSMGASSLHVAGGRQLLKTDDVPSTSTSPSTNSNPVLLQSIPSSSKNQSLTTAGKTSQSSVVLGPTIEQDTKPYQNVKQTVMIPKTTEQRPATGQDCINNNPQMDYLDTSSSATSVCLSQADGSLQQNFPPSSFHQHHLLKDTVPDSEFEVTDPRNNLLFGVNIDGQLGLPLNADLLANDIGTDKYMDQLPGNGISNFISSKDSQQELSSSMISHSFGVADMAFNSIDSAINDTPFLNRNSRSAAGPAHQRMRTYTKVHKRGAVGRSIDINRYSGYDELKHDVARMFGIEGQLGDQNRVGWKLVYEDHEKDVLLVGDDPWEDFVKCVRCIRILSPQEEMQMRLVGDFGDSFLPNQACSSSDGGHPWRITGD.

The TF-B3 DNA-binding region spans 132 to 234 (FCKTLTASDT…QLLLGIRRAN (103 aa)). The disordered stretch occupies residues 763 to 812 (KTDDVPSTSTSPSTNSNPVLLQSIPSSSKNQSLTTAGKTSQSSVVLGPTI). Residues 768-780 (PSTSTSPSTNSNP) show a composition bias toward low complexity. A compositionally biased stretch (polar residues) spans 781-806 (VLLQSIPSSSKNQSLTTAGKTSQSSV). Residues 998 to 1082 (RTYTKVHKRG…RCIRILSPQE (85 aa)) enclose the PB1 domain.

Belongs to the ARF family. In terms of assembly, homodimers and heterodimers. In terms of tissue distribution, expressed in roots, culms, leaves and young panicles.

Its subcellular location is the nucleus. Auxin response factors (ARFs) are transcriptional factors that bind specifically to the DNA sequence 5'-TGTCTC-3' found in the auxin-responsive promoter elements (AuxREs). The polypeptide is Auxin response factor 21 (ARF21) (Oryza sativa subsp. japonica (Rice)).